Reading from the N-terminus, the 354-residue chain is MPHRSLRATVVLLLVILKKQPSSSAPLNGSKWTYVGPAGEKNWSKKYPSCGGLLQSPIDLHSDILQYDASLAPLQFQGYNVSVEKLLNLTNDGHSVRLNLNSDMYIQGLQPHHYRAEQLHLHWGNRNDPHGSEHTVSGKHFAAELHIVHYNSDLYPDFSTASDKSEGLAVLAVLIEIGSANPSYDKIFSHLQHVKYKGQQVLIPGFNIEELLPESPGEYYRYEGSLTTPPCYPTVLWTVFRNPVQISQEQLLALETALYFTHMDDPTPREMINNFRQVQKFDERLVYISFRQGLLTDTGLSLGIILSVALAGVLGISIVLAVSIWLFKRKKSKKGDNKGVIYKPAIKKEAEVHA.

The first 24 residues, 1–24 (MPHRSLRATVVLLLVILKKQPSSS), serve as a signal peptide directing secretion. Topologically, residues 25 to 301 (APLNGSKWTY…QGLLTDTGLS (277 aa)) are extracellular. Residues Asn-28, Asn-42, Asn-80, and Asn-88 are each glycosylated (N-linked (GlcNAc...) asparagine). An Alpha-carbonic anhydrase domain is found at 30–290 (SKWTYVGPAG…FDERLVYISF (261 aa)). Cys-50 and Cys-231 are oxidised to a cystine. The active-site Proton donor/acceptor is His-94. Zn(2+) is bound by residues His-120, His-122, and His-146. A substrate-binding site is contributed by 227–228 (TT). Residues 302-322 (LGIILSVALAGVLGISIVLAV) traverse the membrane as a helical segment. Residues 323 to 354 (SIWLFKRKKSKKGDNKGVIYKPAIKKEAEVHA) lie on the Cytoplasmic side of the membrane.

It belongs to the alpha-carbonic anhydrase family. In terms of assembly, homodimer. The cofactor is Zn(2+).

The protein resides in the membrane. Its subcellular location is the cell membrane. It carries out the reaction hydrogencarbonate + H(+) = CO2 + H2O. With respect to regulation, inhibited by acetazolamide. Functionally, reversible hydration of carbon dioxide. The protein is Carbonic anhydrase 12 of Mus musculus (Mouse).